Here is a 199-residue protein sequence, read N- to C-terminus: MIQISDRAKAHFLRLIQREGVPGMGVRLSAVDPGTARADARLEFAEPSELVGDEWLIDCGDFTLYVASASVAWLDSAEIDYVTQATGSQQLIIKAPKIKGQELSQVASLVERVCWVVENEINPQLASHGGRVEVQEVSAEGVVLLRFGGGCHGCGMVDVTLKQGVEKTLMERVHGVIAVRDATDHSTGAAPYISRNFAS.

[4Fe-4S] cluster is bound by residues Cys151 and Cys154.

It belongs to the NfuA family. Homodimer. [4Fe-4S] cluster serves as cofactor.

In terms of biological role, involved in iron-sulfur cluster biogenesis. Binds a 4Fe-4S cluster, can transfer this cluster to apoproteins, and thereby intervenes in the maturation of Fe/S proteins. Could also act as a scaffold/chaperone for damaged Fe/S proteins. The protein is Fe/S biogenesis protein NfuA of Xylella fastidiosa (strain 9a5c).